The following is a 382-amino-acid chain: Ribosomal RNA large subunit methyltransferase F (382 aa).

2 disordered regions span residues 1–53 (MTKP…LHRD) and 269–288 (NRAS…KSQL). Over residues 8 to 24 (ASRKPVTKSGRNSKRSR) the composition is skewed to basic residues. A compositionally biased stretch (basic and acidic residues) spans 269 to 286 (NRASKGHKLEPKAPKDKS).

The protein belongs to the methyltransferase superfamily. METTL16/RlmF family.

Its subcellular location is the cytoplasm. It catalyses the reaction adenosine(1618) in 23S rRNA + S-adenosyl-L-methionine = N(6)-methyladenosine(1618) in 23S rRNA + S-adenosyl-L-homocysteine + H(+). Its function is as follows. Specifically methylates the adenine in position 1618 of 23S rRNA. This Shewanella woodyi (strain ATCC 51908 / MS32) protein is Ribosomal RNA large subunit methyltransferase F.